Reading from the N-terminus, the 614-residue chain is Vitamin B12 transporter BtuB (614 aa).

Residues methionine 1–alanine 20 form the signal peptide. Positions aspartate 26–asparagine 33 match the TonB box motif. A TBDR plug domain is found at proline 38–threonine 152. Residues leucine 83, serine 85, asparagine 92, and valine 110 to serine 111 each bind cyanocob(III)alamin. One can recognise a TBDR beta-barrel domain in the interval glutamate 155–phenylalanine 614. A run of 3 beta stranded transmembrane segments spans residues threonine 158 to glycine 165, tyrosine 169 to glutamine 178, and threonine 184 to threonine 195. Ca(2+) is bound by residues aspartate 199, glutamine 211, aspartate 213, and aspartate 215. Transmembrane regions (beta stranded) follow at residues phenylalanine 217–glutamate 227 and aspartate 232–asparagine 248. Ca(2+) contacts are provided by tyrosine 249 and aspartate 250. Alanine 251 provides a ligand contact to cyanocob(III)alamin. Aspartate 261 is a Ca(2+) binding site. The next 14 beta stranded transmembrane spans lie at arginine 263–asparagine 277, glutamate 279–asparagine 296, threonine 309–isoleucine 325, histidine 328–tryptophan 337, tyrosine 353–glycine 369, phenylalanine 371–aspartate 381, phenylalanine 385–isoleucine 400, tyrosine 403–asparagine 417, lysine 434–glutamate 443, valine 449–asparagine 458, tyrosine 473–phenylalanine 490, proline 494–alanine 509, arginine 517–tryptophan 529, and aspartate 535–aspartate 550. Threonine 309 contacts cyanocob(III)alamin. Arginine 517 contributes to the cyanocob(III)alamin binding site. Tyrosine 551 contributes to the cyanocob(III)alamin binding site. 3 beta stranded membrane passes run threonine 558–alanine 572, isoleucine 585–valine 596, and alanine 602–phenylalanine 614. A TonB C-terminal box motif is present at residues tyrosine 597 to phenylalanine 614.

It belongs to the TonB-dependent receptor family. BtuB (TC 1.B.14.3.1) subfamily.

The protein localises to the cell outer membrane. In terms of biological role, involved in the active translocation of vitamin B12 (cyanocobalamin) across the outer membrane to the periplasmic space. It derives its energy for transport by interacting with the trans-periplasmic membrane protein TonB. This Escherichia coli O139:H28 (strain E24377A / ETEC) protein is Vitamin B12 transporter BtuB.